Here is a 573-residue protein sequence, read N- to C-terminus: MIDRLGSLFESAASMLPMSEARSFELFTEITNYDETACDAWIGRIRCGDTDRVTLFRAWYSRRNFGQLSGSVQIPMTTLNARVPIGGLYGDITYPVTSPLAITMGFAACEAAQGNFADAMEAIDATSITGSEHLVAWLKAVVYGAAERWTDVIDEVKGAGKWPDKFLAGAAGVAHGVAAANLGLFTEAERRLTEANDSPAGEACARSIAWYLAMARRSQGNEDAAVALLEWLQTTHPESKVSAALKDPSYRLTTTTAEQIAARADPWDPSSVVTDNSDRDRLLTQAQAELDRQIGLTRVKTQIERYRAATMMAKVRAAKGMKVAQPSKHMIFTGPPGTGKTTIARVVANILAGLGVISEPKLVETSRKDFVAEYEGQSAVKAAKTIDLALGGVLFIDEAYALVQERDGRTDPFGQEALDTLLARMENDRDRLVVIIAGYSSDIDRLLETNEGLRSRFATRIEFDTYSPDELLEIAKVIATDADSSLSAEASKNLLEAAKQLAQRTLRGRPALDVAGNGRYARQLVEAAEQCRDMRLARGVDIEQLDVDRLQEINGSDMAEAIATVHAHLNIRE.

Residue 334–341 (GPPGTGKT) coordinates ATP.

It belongs to the CbxX/CfxQ family. Part of the ESX-1 / type VII secretion system (T7SS), which is composed of cytosolic and membrane components.

Its subcellular location is the cytoplasm. Part of the ESX-1 / type VII specialized secretion system (T7SS), which exports several proteins including EsxA and EsxB. EccA1 exhibits ATPase activity and may provide energy for the export of ESX-1 substrates. This is ESX-1 secretion system protein EccA1 from Mycobacterium leprae (strain TN).